A 100-amino-acid polypeptide reads, in one-letter code: Ubiquitin-related modifier 1 (100 aa).

Glycine 100 is subject to 1-thioglycine. Glycine 100 participates in a covalent cross-link: Glycyl lysine isopeptide (Gly-Lys) (interchain with K-? in acceptor proteins).

This sequence belongs to the URM1 family. In terms of processing, C-terminal thiocarboxylation occurs in 2 steps, it is first acyl-adenylated (-COAMP) via the hesA/moeB/thiF part of UBA4, then thiocarboxylated (-COSH) via the rhodanese domain of UBA4.

The protein resides in the cytoplasm. It participates in tRNA modification; 5-methoxycarbonylmethyl-2-thiouridine-tRNA biosynthesis. Acts as a sulfur carrier required for 2-thiolation of mcm(5)S(2)U at tRNA wobble positions of cytosolic tRNA(Lys), tRNA(Glu) and tRNA(Gln). Serves as sulfur donor in tRNA 2-thiolation reaction by being thiocarboxylated (-COSH) at its C-terminus by the MOCS3 homolog UBA4. The sulfur is then transferred to tRNA to form 2-thiolation of mcm(5)S(2)U. Prior mcm(5) tRNA modification by the elongator complex is required for 2-thiolation. Also acts as a ubiquitin-like protein (UBL) that is covalently conjugated via an isopeptide bond to lysine residues of target proteins such as AHP1. The thiocarboxylated form serves as substrate for conjugation and oxidative stress specifically induces the formation of UBL-protein conjugates. The sequence is that of Ubiquitin-related modifier 1 from Eremothecium gossypii (strain ATCC 10895 / CBS 109.51 / FGSC 9923 / NRRL Y-1056) (Yeast).